The primary structure comprises 238 residues: Cysteine-rich venom protein 2 (238 aa).

The first 19 residues, 1–19, serve as a signal peptide directing secretion; it reads MIAFIVLLSLAAVLQQSSG. Residues 38–164 form the SCP domain; the sequence is VDKHNALRRS…STKYLYVCQY (127 aa). Cystine bridges form between C75-C153, C92-C165, C148-C162, C184-C191, C187-C196, C200-C233, C209-C227, and C218-C231. One can recognise a ShKT domain in the interval 200–233; sequence CEYEDAYTNCNDLVKERKCQTEWIKSQCPATCFC.

It belongs to the CRISP family. As to expression, expressed by the venom gland.

Its subcellular location is the secreted. In terms of biological role, blocks contraction of smooth muscle elicited by high potassium-induced depolarization, but does not block caffeine-stimulated contraction. May target voltage-gated calcium channels (Cav) on smooth muscle. This is Cysteine-rich venom protein 2 from Hydrophis hardwickii (Hardwick's spine-bellied seasnake).